Here is a 127-residue protein sequence, read N- to C-terminus: UPF0166 protein PYRAB06660 (127 aa).

Belongs to the UPF0166 family.

In Pyrococcus abyssi (strain GE5 / Orsay), this protein is UPF0166 protein PYRAB06660.